Here is a 1976-residue protein sequence, read N- to C-terminus: Myosin-10 (1976 aa).

An Omega-N-methylarginine modification is found at Arg18. The region spanning 31–81 (TAKKLVWIPSERHGFEAASIKEERGDEVLVELAENGKKAMVNKDDIQKMNP) is the Myosin N-terminal SH3-like domain. The Myosin motor domain occupies 85–783 (SKVEDMAELT…VLAHLEEERD (699 aa)). Position 178–185 (178–185 (GESGAGKT)) interacts with ATP. Lys442 is subject to N6-acetyllysine. The tract at residues 661-683 (LTKLMATLRNTNPNFVRCIIPNH) is actin-binding. Residues 786–815 (ITDIIIFFQAVCRGYLARKAFAKKQQQLSA) form the IQ domain. Residues 845-1976 (LQVTRQEEEL…INETQPPQSE (1132 aa)) adopt a coiled-coil conformation. The segment at 1126 to 1149 (DFESEKASRNKAEKQKRDLSEELE) is disordered. The span at 1129 to 1149 (SEKASRNKAEKQKRDLSEELE) shows a compositional bias: basic and acidic residues. Ser1145 is subject to Phosphoserine. An N6-acetyllysine mark is found at Lys1241, Lys1301, and Lys1645. 2 disordered regions span residues 1697–1718 (ASSE…DEIA) and 1874–1976 (KANA…PQSE). A compositionally biased stretch (basic and acidic residues) spans 1698–1708 (SSERARRHAEQ). Omega-N-methylarginine is present on Arg1930. 4 positions are modified to phosphoserine: Ser1935, Ser1937, Ser1938, and Ser1939. At Arg1940 the chain carries Omega-N-methylarginine. Residues Ser1952 and Ser1956 each carry the phosphoserine modification. Thr1960 is modified (phosphothreonine). Residues 1967–1976 (INETQPPQSE) are compositionally biased toward polar residues. Ser1975 is subject to Phosphoserine.

It belongs to the TRAFAC class myosin-kinesin ATPase superfamily. Myosin family. In terms of assembly, myosin is a hexameric protein that consists of 2 heavy chain subunits (MHC), 2 alkali light chain subunits (MLC) and 2 regulatory light chain subunits (MLC-2). Interacts with PLEKHG6. Interacts with ECPAS. Interacts with KIF26B. Interacts with LARP6. Interacts with MCC. Interacts with CFAP95. In terms of processing, phosphorylated by ABL2.

The protein localises to the cell projection. It localises to the lamellipodium. In terms of biological role, cellular myosin that appears to play a role in cytokinesis, cell shape, and specialized functions such as secretion and capping. Involved with LARP6 in the stabilization of type I collagen mRNAs for CO1A1 and CO1A2. During cell spreading, plays an important role in cytoskeleton reorganization, focal contacts formation (in the central part but not the margins of spreading cells), and lamellipodial extension; this function is mechanically antagonized by MYH9. This chain is Myosin-10 (MYH10), found in Bos taurus (Bovine).